A 455-amino-acid polypeptide reads, in one-letter code: Exodeoxyribonuclease 7 large subunit (455 aa).

Belongs to the XseA family. As to quaternary structure, heterooligomer composed of large and small subunits.

The protein localises to the cytoplasm. It catalyses the reaction Exonucleolytic cleavage in either 5'- to 3'- or 3'- to 5'-direction to yield nucleoside 5'-phosphates.. Functionally, bidirectionally degrades single-stranded DNA into large acid-insoluble oligonucleotides, which are then degraded further into small acid-soluble oligonucleotides. This chain is Exodeoxyribonuclease 7 large subunit, found in Escherichia coli (strain SMS-3-5 / SECEC).